The primary structure comprises 447 residues: MTRLFGTDGVRGLANKKLTPILALRLGQAAAEVLTSDRESYERRPLAIIGRDPRVSGEMLDAAIASGLASRGVDVVRVGVLPTPAIAFLTDDFGADLGVMISASHNPMPDNGIKFFSAGGKKLPDEVEDRIQAAMDNLTEDGPTATKIGRIISEAPDGRERYLKHLAEVVTTDLSGIKVVVDTANGAASKVAPQAYEAAGAEVVAIHNKPNAFNINEDCGSTHIEKTQEAVVEHGADLGLAHDGDADRCLAVDAEGNVVDGDQIMAILAVGMKEENDLRFNTLVATVMSNLGLKLAMQEQGIDIKETAVGDRYVLEELNRGDFSLGGEQSGHVVLPDDCTTGDGTLTGLSIMARMAKSGKSLKELASVMTVLPQVLINVPVSDKAVILNAPEVKEAIAAAEAELGETGRVLLRPSGTEELFRVMVEAAEKEQARKVAGKLAAVVAAV.

Ser-104 serves as the catalytic Phosphoserine intermediate. Residues Ser-104, Asp-243, Asp-245, and Asp-247 each contribute to the Mg(2+) site. A Phosphoserine modification is found at Ser-104.

The protein belongs to the phosphohexose mutase family. Requires Mg(2+) as cofactor. Activated by phosphorylation.

It carries out the reaction alpha-D-glucosamine 1-phosphate = D-glucosamine 6-phosphate. Catalyzes the conversion of glucosamine-6-phosphate to glucosamine-1-phosphate. The sequence is that of Phosphoglucosamine mutase from Corynebacterium aurimucosum (strain ATCC 700975 / DSM 44827 / CIP 107346 / CN-1) (Corynebacterium nigricans).